A 663-amino-acid chain; its full sequence is Polyunsaturated fatty acid lipoxygenase ALOX15 (663 aa).

The region spanning 2–115 (GVYRIRVSTG…ILNLPEGTGC (114 aa)) is the PLAT domain. The 548-residue stretch at 116–663 (TVVEDSQGLF…PSLVENSVAI (548 aa)) folds into the Lipoxygenase domain. Residues His-361, His-366, His-541, His-545, and Ile-663 each contribute to the Fe cation site.

It belongs to the lipoxygenase family. As to quaternary structure, interacts with PEBP1; in response to IL13/interleukin-13, prevents the interaction of PEBP1 with RAF1 to activate the ERK signaling cascade. Fe cation serves as cofactor. In terms of tissue distribution, found in pituitary and pineal glands as well as leukocytes, kidney, aorta, small intestine and cornea. Also expressed by resident peritoneal macrophages (at protein level).

The protein localises to the cytoplasm. It localises to the cytosol. It is found in the cell membrane. Its subcellular location is the lipid droplet. The catalysed reaction is (5Z,8Z,11Z,14Z)-eicosatetraenoate + O2 = (12S)-hydroperoxy-(5Z,8Z,10E,14Z)-eicosatetraenoate. It carries out the reaction (5Z,8Z,11Z,14Z)-eicosatetraenoate + O2 = (15S)-hydroperoxy-(5Z,8Z,11Z,13E)-eicosatetraenoate. The enzyme catalyses (9Z,12Z)-octadecadienoate + O2 = (13S)-hydroperoxy-(9Z,11E)-octadecadienoate. It catalyses the reaction (5Z,8Z,11Z,14Z)-eicosatetraenoate + 2 O2 = (14R,15S)-dihydroperoxy-(5Z,8Z,10E,12E)-eicosatetraenoate. The catalysed reaction is (5Z,8Z,11Z,14Z)-eicosatetraenoate + 2 O2 = (8S,15S)-dihydroperoxy-(5Z,9E,11Z,13E)-eicosatetraenoate. It carries out the reaction (14S,15R)-epoxy-(5Z,8Z,11Z)-eicosatrienoate + O2 = (8S)-hydroperoxy-(14S,15R)-epoxy-(5Z,9E,11Z)-eicosatrienoate. The enzyme catalyses (14S,15R)-epoxy-(5Z,8Z,11Z)-eicosatrienoate + O2 = (12S)-hydroperoxy-(14S,15R)-epoxy-(5Z,8Z,10E)-eicosatrienoate. It catalyses the reaction (14R,15S)-epoxy-(5Z,8Z,11Z)-eicosatrienoate + O2 = (5S)-hydroperoxy-(14R,15S)-epoxy-(6E,8Z,11Z)-eicosatrienoate. The catalysed reaction is (14R,15S)-epoxy-(5Z,8Z,11Z)-eicosatrienoate + O2 = (12S)-hydroperoxy-(14R,15S)-epoxy-(5Z,8Z,10E)-eicosatrienoate. It carries out the reaction (15R)-hydroperoxy-(5Z,8Z,11Z,13E)-eicosatetraenoate = 15-oxo-(5Z,8Z,11Z,13E)-eicosatetraenoate + H2O. The enzyme catalyses (15S)-hydroperoxy-(5Z,8Z,11Z,13E)-eicosatetraenoate = (14S,15S)-epoxy-(5Z,8Z,10E,12E)-eicosatetraenoate + H2O. It catalyses the reaction (12S)-hydroperoxy-(5Z,8Z,10E,14Z)-eicosatetraenoate = (8S)-hydroxy-(11S,12S)-epoxy-(5Z,9E,14Z)-eicosatrienoate. The catalysed reaction is (4Z,7Z,10Z,13Z,16Z)-docosapentaenoate + O2 = 14-hydroperoxy-(4Z,7Z,10Z,12E,16Z)-docosapentaenoate. It carries out the reaction (7Z,10Z,13Z,16Z,19Z)-docosapentaenoate + O2 = 14-hydroperoxy-(7Z,10Z,12E,16Z,19Z)-docosapentaenoate. The enzyme catalyses (4Z,7Z,10Z,13Z,16Z,19Z)-docosahexaenoate + O2 = (14S)-hydroperoxy-(4Z,7Z,10Z,12E,16Z,19Z)-docosahexaenoate. It catalyses the reaction (4Z,7Z,10Z,13Z,16Z,19Z)-docosahexaenoate + O2 = (17S)-hydroperoxy-(4Z,7Z,10Z,13Z,15E,19Z)-docosahexaenoate. The catalysed reaction is (7S)-hydroperoxy-(4Z,8E,10Z,13Z,16Z,19Z)-docosahexaenoate + O2 = (7S,14S)-dihydroperoxy-(4Z,8E,10Z,12E,16Z,19Z)-docosahexaenoate. It carries out the reaction (7S)-hydroperoxy-(4Z,8E,10Z,13Z,16Z,19Z)-docosahexaenoate + O2 = (7S,17S)-dihydroperoxy-(4Z,8E,10Z,13Z,15E,19Z)-docosahexaenoate. The enzyme catalyses (4Z,7Z,10Z,13Z,16Z,19Z)-docosahexaenoate + O2 = (11S)-hydroperoxy-(4Z,7Z,9E,13Z,16Z,19Z)-docosahexaenoate. It catalyses the reaction N-(5Z,8Z,11Z,14Z)-eicosatetraenoyl-taurine + O2 = N-(12S)-hydroperoxy-(5Z,8Z,10E,14Z)-eicosatetraenoyl-taurine. The catalysed reaction is N-(5Z,8Z,11Z,14Z)-eicosatetraenoyl-gamma-aminobutanoate + O2 = N-(12S)-hydroperoxy-(5Z,8Z,10E,14Z)-eicosatetraenoyl-gamma-aminobutanoate. It carries out the reaction N-(5Z,8Z,11Z,14Z)-eicosatetraenoyl-glycine + O2 = N-(12S)-hydroperoxy-(5Z,8Z,10E,14Z)-eicosatetraenoyl-glycine. The enzyme catalyses N-(5Z,8Z,11Z,14Z)-eicosatetraenoyl-L-alanine + O2 = N-(12S)-hydroperoxy-(5Z,8Z,10E,14Z)-eicosatetraenoyl-alanine. It catalyses the reaction N-(5Z,8Z,11Z,14Z)-eicosatetraenoyl-taurine + O2 = N-(15S)-hydroperoxy-(5Z,8Z,11Z,13E)-eicosatetraenoyl-taurine. The catalysed reaction is N-(5Z,8Z,11Z,14Z)-eicosatetraenoyl-gamma-aminobutanoate + O2 = N-(15S)-hydroperoxy-(5Z,8Z,11Z,13E)-eicosatetraenoyl-gamma-aminobutanoate. It carries out the reaction N-(5Z,8Z,11Z,14Z)-eicosatetraenoyl-glycine + O2 = N-(15S)-hydroperoxy-(5Z,8Z,11Z,13E)-eicosatetraenoyl-glycine. The enzyme catalyses N-(5Z,8Z,11Z,14Z)-eicosatetraenoyl-L-alanine + O2 = N-(15S)-hydroperoxy-(5Z,8Z,11Z,13E)-eicosatetraenoyl-alanine. The protein operates within lipid metabolism; hydroperoxy eicosatetraenoic acid biosynthesis. Its function is as follows. Non-heme iron-containing dioxygenase that catalyzes the stereo-specific peroxidation of free and esterified polyunsaturated fatty acids generating a spectrum of bioactive lipid mediators. It inserts peroxyl groups at C12 or C15 of arachidonate ((5Z,8Z,11Z,14Z)-eicosatetraenoate) producing both 12-hydroperoxyeicosatetraenoate/12-HPETE and 15-hydroperoxyeicosatetraenoate/15-HPETE. It may then act on 12-HPETE to produce hepoxilins, which may show pro-inflammatory properties. Can also peroxidize linoleate ((9Z,12Z)-octadecadienoate) to 13-hydroperoxyoctadecadienoate. May participate in the sequential oxidations of DHA ((4Z,7Z,10Z,13Z,16Z,19Z)-docosahexaenoate) to generate specialized pro-resolving mediators (SPMs)like resolvin D5 ((7S,17S)-diHPDHA) and (7S,14S)-diHPDHA, that actively down-regulate the immune response and have anti-aggregation properties with platelets. Can convert epoxy fatty acids to hydroperoxy-epoxides derivatives followed by an intramolecular nucleophilic substitution leading to the formation of monocyclic endoperoxides. Plays an important role during the maintenance of self-tolerance by peroxidizing membrane-bound phosphatidylethanolamine which can then signal the sorting process for clearance of apoptotic cells during inflammation and prevent an autoimmune response. In addition to its role in the immune and inflammatory responses, this enzyme may play a role in epithelial wound healing in the cornea through production of lipoxin A4 (LXA(4)) and docosahexaenoic acid-derived neuroprotectin D1 (NPD1; 10R,17S-HDHA), both lipid autacoids exhibit anti-inflammatory and neuroprotective properties. Furthermore, it may regulate actin polymerization which is crucial for several biological processes such as the phagocytosis of apoptotic cells. It is also implicated in the generation of endogenous ligands for peroxisome proliferator activated receptor (PPAR-gamma), hence modulating macrophage development and function. It may also exert a negative effect on skeletal development by regulating bone mass through this pathway. As well as participates in ER stress and downstream inflammation in adipocytes, pancreatic islets, and liver. Finally, it is also involved in the cellular response to IL13/interleukin-13. The polypeptide is Polyunsaturated fatty acid lipoxygenase ALOX15 (Mus musculus (Mouse)).